We begin with the raw amino-acid sequence, 294 residues long: Elongation factor Ts (294 aa).

Residues Thr-79–Val-82 are involved in Mg(2+) ion dislocation from EF-Tu.

It belongs to the EF-Ts family.

It is found in the cytoplasm. Its function is as follows. Associates with the EF-Tu.GDP complex and induces the exchange of GDP to GTP. It remains bound to the aminoacyl-tRNA.EF-Tu.GTP complex up to the GTP hydrolysis stage on the ribosome. This is Elongation factor Ts from Shouchella clausii (strain KSM-K16) (Alkalihalobacillus clausii).